The sequence spans 500 residues: Probable cytosol aminopeptidase (500 aa).

Positions 265 and 270 each coordinate Mn(2+). Lys277 is an active-site residue. The Mn(2+) site is built by Asp288, Asp347, and Glu349. Arg351 is a catalytic residue.

This sequence belongs to the peptidase M17 family. The cofactor is Mn(2+).

It is found in the cytoplasm. It carries out the reaction Release of an N-terminal amino acid, Xaa-|-Yaa-, in which Xaa is preferably Leu, but may be other amino acids including Pro although not Arg or Lys, and Yaa may be Pro. Amino acid amides and methyl esters are also readily hydrolyzed, but rates on arylamides are exceedingly low.. The enzyme catalyses Release of an N-terminal amino acid, preferentially leucine, but not glutamic or aspartic acids.. Its function is as follows. Presumably involved in the processing and regular turnover of intracellular proteins. Catalyzes the removal of unsubstituted N-terminal amino acids from various peptides. This Rickettsia africae (strain ESF-5) protein is Probable cytosol aminopeptidase.